The primary structure comprises 515 residues: 2,3-bisphosphoglycerate-independent phosphoglycerate mutase (515 aa).

Mn(2+)-binding residues include Asp-14 and Ser-64. Ser-64 functions as the Phosphoserine intermediate in the catalytic mechanism. Substrate is bound by residues His-125, 155–156, Arg-187, Arg-193, 263–266, and Lys-337; these read RD and RADR. The Mn(2+) site is built by Asp-404, His-408, Asp-445, His-446, and His-464.

The protein belongs to the BPG-independent phosphoglycerate mutase family. As to quaternary structure, monomer. Mn(2+) serves as cofactor.

It catalyses the reaction (2R)-2-phosphoglycerate = (2R)-3-phosphoglycerate. It participates in carbohydrate degradation; glycolysis; pyruvate from D-glyceraldehyde 3-phosphate: step 3/5. Catalyzes the interconversion of 2-phosphoglycerate and 3-phosphoglycerate. In Yersinia pseudotuberculosis serotype I (strain IP32953), this protein is 2,3-bisphosphoglycerate-independent phosphoglycerate mutase.